Here is a 504-residue protein sequence, read N- to C-terminus: Lysine--tRNA ligase (504 aa).

Mg(2+) contacts are provided by E411 and E418.

It belongs to the class-II aminoacyl-tRNA synthetase family. In terms of assembly, homodimer. Requires Mg(2+) as cofactor.

Its subcellular location is the cytoplasm. The catalysed reaction is tRNA(Lys) + L-lysine + ATP = L-lysyl-tRNA(Lys) + AMP + diphosphate. The chain is Lysine--tRNA ligase from Clostridium botulinum (strain Okra / Type B1).